A 234-amino-acid polypeptide reads, in one-letter code: Orotate phosphoribosyltransferase (234 aa).

Residue Lys30 participates in 5-phospho-alpha-D-ribose 1-diphosphate binding. Orotate is bound at residue 38–39 (FF). Residues 80–81 (YK), Arg110, Lys111, Lys114, His116, and 136–144 (DDVITAGTA) contribute to the 5-phospho-alpha-D-ribose 1-diphosphate site. Orotate-binding residues include Thr140 and Arg168.

Belongs to the purine/pyrimidine phosphoribosyltransferase family. PyrE subfamily. In terms of assembly, homodimer.

It catalyses the reaction orotidine 5'-phosphate + diphosphate = orotate + 5-phospho-alpha-D-ribose 1-diphosphate. The protein operates within pyrimidine metabolism; UMP biosynthesis via de novo pathway; UMP from orotate: step 1/2. Catalyzes the transfer of a ribosyl phosphate group from 5-phosphoribose 1-diphosphate to orotate, leading to the formation of orotidine monophosphate (OMP). The protein is Orotate phosphoribosyltransferase (URA5) of Metarhizium anisopliae (Entomophthora anisopliae).